The chain runs to 191 residues: dCTP deaminase, dUMP-forming (191 aa).

DCTP is bound by residues 101-106, Asp-119, 127-129, Gln-148, Tyr-162, and Gln-174; these read KSSLGR and TLE. The active-site Proton donor/acceptor is the Glu-129. The segment at 163–191 is disordered; sequence GSAKYGSRYQGQRGPTPSRSYQNFHRTPI. Residues 171 to 191 are compositionally biased toward polar residues; sequence YQGQRGPTPSRSYQNFHRTPI.

Belongs to the dCTP deaminase family. As to quaternary structure, homotrimer.

It catalyses the reaction dCTP + 2 H2O = dUMP + NH4(+) + diphosphate. It functions in the pathway pyrimidine metabolism; dUMP biosynthesis; dUMP from dCTP: step 1/1. Bifunctional enzyme that catalyzes both the deamination of dCTP to dUTP and the hydrolysis of dUTP to dUMP without releasing the toxic dUTP intermediate. In Nocardioides sp. (strain ATCC BAA-499 / JS614), this protein is dCTP deaminase, dUMP-forming.